Reading from the N-terminus, the 448-residue chain is Bifunctional protein GlmU (448 aa).

Residues 1–232 form a pyrophosphorylase region; that stretch reads MSDRSLLVVV…ADEVAGVNSR (232 aa). Residues 11–14, Lys-25, Gln-78, and 83–84 contribute to the UDP-N-acetyl-alpha-D-glucosamine site; these read LAAG and GT. Position 108 (Asp-108) interacts with Mg(2+). 4 residues coordinate UDP-N-acetyl-alpha-D-glucosamine: Gly-144, Glu-158, Asn-173, and Asn-230. Residue Asn-230 coordinates Mg(2+). The tract at residues 233 to 253 is linker; that stretch reads VQLAEAEAILQRRLRLAAMAG. The interval 254-448 is N-acetyltransferase; sequence GATLVAPETV…FRAARSKPKG (195 aa). UDP-N-acetyl-alpha-D-glucosamine is bound by residues Arg-319 and Lys-337. His-349 acts as the Proton acceptor in catalysis. UDP-N-acetyl-alpha-D-glucosamine is bound by residues Tyr-352 and Asn-363. Acetyl-CoA-binding positions include Ala-366, 372–373, Thr-409, and Arg-426; that span reads NY.

It in the N-terminal section; belongs to the N-acetylglucosamine-1-phosphate uridyltransferase family. The protein in the C-terminal section; belongs to the transferase hexapeptide repeat family. Homotrimer. It depends on Mg(2+) as a cofactor.

Its subcellular location is the cytoplasm. The catalysed reaction is alpha-D-glucosamine 1-phosphate + acetyl-CoA = N-acetyl-alpha-D-glucosamine 1-phosphate + CoA + H(+). It carries out the reaction N-acetyl-alpha-D-glucosamine 1-phosphate + UTP + H(+) = UDP-N-acetyl-alpha-D-glucosamine + diphosphate. It participates in nucleotide-sugar biosynthesis; UDP-N-acetyl-alpha-D-glucosamine biosynthesis; N-acetyl-alpha-D-glucosamine 1-phosphate from alpha-D-glucosamine 6-phosphate (route II): step 2/2. Its pathway is nucleotide-sugar biosynthesis; UDP-N-acetyl-alpha-D-glucosamine biosynthesis; UDP-N-acetyl-alpha-D-glucosamine from N-acetyl-alpha-D-glucosamine 1-phosphate: step 1/1. The protein operates within bacterial outer membrane biogenesis; LPS lipid A biosynthesis. Functionally, catalyzes the last two sequential reactions in the de novo biosynthetic pathway for UDP-N-acetylglucosamine (UDP-GlcNAc). The C-terminal domain catalyzes the transfer of acetyl group from acetyl coenzyme A to glucosamine-1-phosphate (GlcN-1-P) to produce N-acetylglucosamine-1-phosphate (GlcNAc-1-P), which is converted into UDP-GlcNAc by the transfer of uridine 5-monophosphate (from uridine 5-triphosphate), a reaction catalyzed by the N-terminal domain. The protein is Bifunctional protein GlmU of Xanthobacter autotrophicus (strain ATCC BAA-1158 / Py2).